Consider the following 214-residue polypeptide: RNA pyrophosphohydrolase (214 aa).

The region spanning 6-149 (GFRPNVGIIL…KRDVYQLALT (144 aa)) is the Nudix hydrolase domain. Positions 38-59 (GGIKYGETPMQAMYRELHEETG) match the Nudix box motif.

It belongs to the Nudix hydrolase family. RppH subfamily. Requires a divalent metal cation as cofactor.

In terms of biological role, accelerates the degradation of transcripts by removing pyrophosphate from the 5'-end of triphosphorylated RNA, leading to a more labile monophosphorylated state that can stimulate subsequent ribonuclease cleavage. The sequence is that of RNA pyrophosphohydrolase from Burkholderia cenocepacia (strain ATCC BAA-245 / DSM 16553 / LMG 16656 / NCTC 13227 / J2315 / CF5610) (Burkholderia cepacia (strain J2315)).